The chain runs to 489 residues: Betaine aldehyde dehydrogenase (489 aa).

K(+)-binding residues include Thr26 and Asp93. An NAD(+)-binding site is contributed by 150-152; the sequence is GAW. Lys162 acts as the Charge relay system in catalysis. 176–179 contacts NAD(+); sequence KPSE. Val180 lines the K(+) pocket. NAD(+) is bound at residue 229-232; sequence GVET. Leu245 contacts K(+). Glu251 functions as the Proton acceptor in the catalytic mechanism. Positions 253, 285, and 386 each coordinate NAD(+). Cys285 (nucleophile) is an active-site residue. The residue at position 285 (Cys285) is a Cysteine sulfenic acid (-SOH). Residues Lys456 and Gly459 each contribute to the K(+) site. The Charge relay system role is filled by Glu463.

It belongs to the aldehyde dehydrogenase family. Dimer of dimers. K(+) serves as cofactor.

The enzyme catalyses betaine aldehyde + NAD(+) + H2O = glycine betaine + NADH + 2 H(+). Its pathway is amine and polyamine biosynthesis; betaine biosynthesis via choline pathway; betaine from betaine aldehyde: step 1/1. Involved in the biosynthesis of the osmoprotectant glycine betaine. Catalyzes the irreversible oxidation of betaine aldehyde to the corresponding acid. The chain is Betaine aldehyde dehydrogenase from Burkholderia lata (strain ATCC 17760 / DSM 23089 / LMG 22485 / NCIMB 9086 / R18194 / 383).